The following is a 239-amino-acid chain: MQKHDLLYSGKAKSVYATDNPTQIIMHYNDDATAGNGAKHAVIADKGILNNQITTLIFKVLKAADIPTHHIETLNDREQLCQKVTIFPLEVIVRNTVAGSMAKRLGMEEGTELDNVVFEICYKNDKLNDPLINDDHAVALGAASYEDLDTIYELTDKINQSLSALFAACQINLVDFKIEFGRTAAGEIVLADEISPDTCRLWDMQTNNKLDKDRFRRDLGGLTDAYREVLRRLQQLELE.

Belongs to the SAICAR synthetase family.

It carries out the reaction 5-amino-1-(5-phospho-D-ribosyl)imidazole-4-carboxylate + L-aspartate + ATP = (2S)-2-[5-amino-1-(5-phospho-beta-D-ribosyl)imidazole-4-carboxamido]succinate + ADP + phosphate + 2 H(+). It participates in purine metabolism; IMP biosynthesis via de novo pathway; 5-amino-1-(5-phospho-D-ribosyl)imidazole-4-carboxamide from 5-amino-1-(5-phospho-D-ribosyl)imidazole-4-carboxylate: step 1/2. This Dichelobacter nodosus (strain VCS1703A) protein is Phosphoribosylaminoimidazole-succinocarboxamide synthase.